Here is an 878-residue protein sequence, read N- to C-terminus: Pyruvate, phosphate dikinase (878 aa).

An N-terminal region spans residues 1 to 347; the sequence is MKKLIYYFGS…LYILQTRTAK (347 aa). Arg96 lines the ATP pocket. A linker 1 region spans residues 348–404; sequence RTAIAAINIAVQMVEEKLISKEQALMRIDPESLNQLLHTRIDYSKGLTSIAEGLPAS. Residues 405–502 are central; that stretch reads PGAATGIAVF…VIKQGDIITI (98 aa). Thr457 is modified (phosphothreonine; by PDRP1). Residue His459 is the Tele-phosphohistidine intermediate of the active site. The linker 2 stretch occupies residues 503 to 537; that stretch reads DGGSGKIFLGEMPLIQPTFSEESKLILDWADEISS. Residues 538–878 are C-terminal; it reads LKVRANAETV…ASAQAKIKHG (341 aa). 7 residues coordinate substrate: Arg565, Arg621, Glu749, Gly770, Thr771, Asn772, and Asp773. Glu749 lines the Mg(2+) pocket. Position 773 (Asp773) interacts with Mg(2+). The active-site Proton donor is Cys835.

This sequence belongs to the PEP-utilizing enzyme family. Homodimer. The cofactor is Mg(2+). Phosphorylation of Thr-457 in the dark inactivates the enzyme. Dephosphorylation upon light stimulation reactivates the enzyme.

It catalyses the reaction pyruvate + phosphate + ATP = phosphoenolpyruvate + AMP + diphosphate + H(+). Activated by light-induced dephosphorylation. Inhibited by dark-induced phosphorylation. Both reactions are catalyzed by PDRP1. Catalyzes the reversible phosphorylation of pyruvate and phosphate. The protein is Pyruvate, phosphate dikinase (ppdK) of Rickettsia felis (strain ATCC VR-1525 / URRWXCal2) (Rickettsia azadi).